Reading from the N-terminus, the 427-residue chain is Histidinol dehydrogenase (427 aa).

Substrate-binding residues include Ser232, Gln254, and His257. Zn(2+)-binding residues include Gln254 and His257. Active-site proton acceptor residues include Glu322 and His323. 4 residues coordinate substrate: His323, Asp356, Glu410, and His415. Asp356 contributes to the Zn(2+) binding site. His415 serves as a coordination point for Zn(2+).

The protein belongs to the histidinol dehydrogenase family. It depends on Zn(2+) as a cofactor.

The catalysed reaction is L-histidinol + 2 NAD(+) + H2O = L-histidine + 2 NADH + 3 H(+). It participates in amino-acid biosynthesis; L-histidine biosynthesis; L-histidine from 5-phospho-alpha-D-ribose 1-diphosphate: step 9/9. Functionally, catalyzes the sequential NAD-dependent oxidations of L-histidinol to L-histidinaldehyde and then to L-histidine. This chain is Histidinol dehydrogenase, found in Listeria monocytogenes serovar 1/2a (strain ATCC BAA-679 / EGD-e).